We begin with the raw amino-acid sequence, 372 residues long: Stress-activated protein kinase JNK (372 aa).

The region spanning 24–320 (YINLRPIGSG…VDEALKHEYI (297 aa)) is the Protein kinase domain. Residues 31 to 36 (GSGAQG) and lysine 53 contribute to the ATP site. Residue aspartate 149 is the Proton acceptor of the active site. Position 181 is a phosphothreonine (threonine 181). Positions 181 to 183 (TPY) match the TXY motif. Tyrosine 183 is subject to Phosphotyrosine.

This sequence belongs to the protein kinase superfamily. CMGC Ser/Thr protein kinase family. MAP kinase subfamily. In terms of assembly, interacts with MKP-4 (via tyrosine-protein phosphatase domain); the interaction dephosphorylates bsk. It depends on Mg(2+) as a cofactor. Post-translationally, dually phosphorylated on Thr-181 and Tyr-183, which activates the enzyme. As to expression, during gastrulation, expression is seen in cells undergoing morphogenetic movements. By stage 9 of embryonic development, expression is ubiquitous. At stages 12-14, expression occurs in epidermis and central nervous system. At stage 15, expression is restricted to ventral nerve cord, brain and some peripheral neurons. In larvae, expression is seen in all imaginal disks, with highest levels in wing and eye disks, and in the CNS. Adults express the protein in fat body and hemocytes.

The protein resides in the nucleus. The protein localises to the cytoplasm. It catalyses the reaction L-seryl-[protein] + ATP = O-phospho-L-seryl-[protein] + ADP + H(+). It carries out the reaction L-threonyl-[protein] + ATP = O-phospho-L-threonyl-[protein] + ADP + H(+). With respect to regulation, activated by threonine and tyrosine phosphorylation by the dual specificity kinase, hep. Inhibited by dual specificity phosphatase, puckered. Mitogen-activated protein kinase and key component of the c-Jun N-terminal kinase (JNK) pathway which phosphorylate and activate transcription factors involved in a wide range of biological processes including response to various stresses, cellular proliferation, differentiation and migration, and regulation of cell shape. Responds to activation by environmental stress by phosphorylating a number of transcription factors, primarily components of AP-1 such as Jra and also the transcriptional repressor aop, and thus regulates transcriptional activity. Component of the immune response activated by bacterial infection, and is involved in wound healing and in dorsal closure, a morphogenetic movement during embryogenesis. Functions in the systematic response to wounding acting downstream of the Hayan-phenoloxidase PPO1 cascade. During epidermal wound healing involved in cellular polarization by inducing the translocation of sktl and mys/integrin beta to the trailing edge. Exhibits cytoprotective activity in neuronal cells in response to wounding to the integument. Controls the expression of a phosphatase, puckered, at the edges of wounded epidermal tissue and in the dorsal epithelium during dorsal closure. Regulates the activity of SREBP in neurons and thereby the accumulation of lipids in glia. Plays a role in positively regulating the expression of DIP2 independently of AP-1, thereby ensuring proper axon guidance in mushroom bodies. In enterocytes and differentiating progenitors of the gut that are experiencing inorganic phosphate (Pi) deficiency, activated by Cka to induce nearby progenitor cells to proliferate and form new absorptive cells, probably helping the organism to cope with the nutrient deficiency by maximizing absorption of dietary Pi. The sequence is that of Stress-activated protein kinase JNK from Drosophila melanogaster (Fruit fly).